The chain runs to 324 residues: Lipid droplet-associated hydrolase (324 aa).

The Nucleophile role is filled by S136. Residues D270 and H299 each act as charge relay system in the active site.

Belongs to the AB hydrolase superfamily. LDAH family.

The protein resides in the lipid droplet. Its subcellular location is the endoplasmic reticulum. The enzyme catalyses a cholesterol ester + H2O = cholesterol + a fatty acid + H(+). Probable serine lipid hydrolase associated with lipid droplets. Has low cholesterol esterase activity. Appears to lack triglyceride lipase activity. Involved in cholesterol and triglyceride homeostasis; stimulates cellular triglyceride accumulation and cellular cholesterol release. In Gallus gallus (Chicken), this protein is Lipid droplet-associated hydrolase.